A 296-amino-acid chain; its full sequence is Pseudouridine-5'-phosphate glycosidase (296 aa).

The active-site Proton donor is E21. The substrate site is built by K81 and V101. D130 is a Mn(2+) binding site. A substrate-binding site is contributed by 132-134; that stretch reads SQD. The active-site Nucleophile is K151.

It belongs to the pseudouridine-5'-phosphate glycosidase family. In terms of assembly, homotrimer. The cofactor is Mn(2+).

The catalysed reaction is D-ribose 5-phosphate + uracil = psi-UMP + H2O. Catalyzes the reversible cleavage of pseudouridine 5'-phosphate (PsiMP) to ribose 5-phosphate and uracil. Functions biologically in the cleavage direction, as part of a pseudouridine degradation pathway. This chain is Pseudouridine-5'-phosphate glycosidase, found in Fervidobacterium nodosum (strain ATCC 35602 / DSM 5306 / Rt17-B1).